The sequence spans 752 residues: Coiled-coil domain-containing protein 157 (752 aa).

Over residues 135-154 (QQPLPQKGANQRETPTSKPT) the composition is skewed to polar residues. Disordered stretches follow at residues 135-163 (QQPL…ARSP) and 316-336 (QALK…EQCL). Coiled-coil stretches lie at residues 276–544 (AAEQ…LLVA) and 579–615 (DHME…VAQQ). Over residues 316-329 (QALKQEQGARRRQA) the composition is skewed to basic and acidic residues. 2 disordered regions span residues 620 to 707 (LIPQ…QPSK) and 731 to 752 (RKRL…ERPM). Over residues 628–648 (SPSSKGTQGATPPVQAKSTSP) the composition is skewed to polar residues. Over residues 671–692 (TSPPRQPCTSPPRQPCTSPPRQ) the composition is skewed to pro residues. Over residues 693–707 (PCTSPSRQPCSQPSK) the composition is skewed to polar residues.

This is Coiled-coil domain-containing protein 157 (CCDC157) from Homo sapiens (Human).